A 371-amino-acid chain; its full sequence is tRNA-specific 2-thiouridylase MnmA (371 aa).

ATP-binding positions include 13 to 20 (GMSGGVDS) and M39. Residues 99 to 101 (NPD) form an interaction with target base in tRNA region. C104 acts as the Nucleophile in catalysis. An intrachain disulfide couples C104 to C200. Residue G128 coordinates ATP. Residues 150–152 (KDQ) are interaction with tRNA. The active-site Cysteine persulfide intermediate is C200. Positions 308–309 (RY) are interaction with tRNA.

Belongs to the MnmA/TRMU family.

The protein resides in the cytoplasm. It catalyses the reaction S-sulfanyl-L-cysteinyl-[protein] + uridine(34) in tRNA + AH2 + ATP = 2-thiouridine(34) in tRNA + L-cysteinyl-[protein] + A + AMP + diphosphate + H(+). In terms of biological role, catalyzes the 2-thiolation of uridine at the wobble position (U34) of tRNA, leading to the formation of s(2)U34. This Bacillus cereus (strain ATCC 10987 / NRS 248) protein is tRNA-specific 2-thiouridylase MnmA.